The sequence spans 404 residues: Acetate kinase (404 aa).

N7 contacts Mg(2+). K14 contributes to the ATP binding site. R98 contributes to the substrate binding site. D155 (proton donor/acceptor) is an active-site residue. Residues 214 to 218 (HLGNG), 289 to 291 (DLR), and 337 to 341 (GIGEN) each bind ATP. E390 is a binding site for Mg(2+).

The protein belongs to the acetokinase family. As to quaternary structure, homodimer. Mg(2+) serves as cofactor. The cofactor is Mn(2+).

The protein localises to the cytoplasm. It carries out the reaction acetate + ATP = acetyl phosphate + ADP. The protein operates within metabolic intermediate biosynthesis; acetyl-CoA biosynthesis; acetyl-CoA from acetate: step 1/2. Its function is as follows. Catalyzes the formation of acetyl phosphate from acetate and ATP. Can also catalyze the reverse reaction. The polypeptide is Acetate kinase (Rippkaea orientalis (strain PCC 8801 / RF-1) (Cyanothece sp. (strain PCC 8801))).